The following is a 100-amino-acid chain: MQKPCKENEGKPKCSVPKREEKRPYGEFERQQTEGNFRQRLLQSLEEFKEDIDYRHFKDEEMTREGDEMERCLEEIRGLRKKFRALHSNHRHSRDRPYPI.

A compositionally biased stretch (basic and acidic residues) spans methionine 1–glutamine 32. The interval methionine 1–glutamate 34 is disordered. Positions glutamate 60–serine 88 form a coiled coil.

The protein belongs to the TFS-II family. TFA subfamily. In terms of tissue distribution, highly expressed in normal and fetal brain tissues, and weakly expressed in uterus and ovary. Down-regulated in epithelial ovarian, cervical, prostate, breast, brain and lung cancer cell lines and in brain and ovarian tumors.

Its subcellular location is the nucleus. Functionally, plays a role in the negative regulation of NF-kappa-B signaling at the basal level by modulating transcriptional activity of NF-kappa-B on its target gene promoters. Associates with cyclin D1 promoter containing Myc E-box sequence and transcriptionally represses cyclin D1 expression. Regulates telomerase reverse transcriptase expression and telomerase activity in both ALT (alternative lengthening of telomeres)and telomerase-positive cell lines. The chain is Transcription elongation factor A protein-like 7 (TCEAL7) from Homo sapiens (Human).